The following is a 132-amino-acid chain: Phosphomevalonate dehydratase small subunit (132 aa).

The active-site Proton acceptor is the S62.

Belongs to the AcnX type II small subunit family. As to quaternary structure, heterodimer composed of a large subunit (PMDh-L) and a small subunit (PMDh-S).

The catalysed reaction is (R)-5-phosphomevalonate = (2E)-3-methyl-5-phosphooxypent-2-enoate + H2O. Its pathway is isoprenoid biosynthesis; isopentenyl diphosphate biosynthesis via mevalonate pathway. Component of a hydro-lyase that catalyzes the dehydration of mevalonate 5-phosphate (MVA5P) to form trans-anhydromevalonate 5-phosphate (tAHMP). Involved in the archaeal mevalonate (MVA) pathway, which provides fundamental precursors for isoprenoid biosynthesis, such as isopentenyl diphosphate (IPP) and dimethylallyl diphosphate (DMAPP). The sequence is that of Phosphomevalonate dehydratase small subunit from Methanocella arvoryzae (strain DSM 22066 / NBRC 105507 / MRE50).